The following is a 1145-amino-acid chain: MAEIVASDEMNEYFNTLEGTLKKEIDIVNDARSRGKDPKPHVEIPLAKDLADRVENLIGVKGVAELIRKLEETMSREEAALALGREVAQGKVGEFDSKSEAIEAAIRVSVAMLTEGVVAAPIEGIDRASIGKNDDGSEYVSIFYAGPIRSAGGTAQALSVLVGDYVRRGVGIDRYKPRKEEVERYIEEIMLYKRVASLQYTPSEEEIRLIVENCPICIDGEPTEAEEVEGHRNLERIDTNRVRGGMALVLAEGLALKAPKIQKHVKNLKIDGWEWLEQLISGVKSSSESDEDEETDGKPKIKPKDKYMRDLIAGRPVFSHPSRPGGFRLRYGRSRNTSFAAAGISPAGMIVMDDFIAPGTQLKVERPGKAAGMAPVDSIEGPTVRLNNGDVIRIDTIDEAYALRSEVEEIIDIGEILINYGDFLENNHPLAPSPYCFEWWIQEYRKAAPDTETNEAELKEPTQEVALDLCKELNIPLHPKFTYLWHDIDNSQYTALADLISKDGLLEADGSFLKLPLQRTIDTGMKKVLEDLLVQHKIQGQALTIEEPLPLIHSLGLDEELSKGWDSLGHEELLENINEIAGFVVRPRAPTRIGARMGRPEKSDKRKMTPAPHALFPIAEAGGNTRSLEKAANFKVNTNSKAGTIPVEIGNRICPACGVEGFEFRCECGEYTLPKLFCPRCGISVNKEKCPKCNSKTTCTSMRKIDFKSIYQKAFESIGERDHLDSFKGVKKMMSKHMTPEPLEKGILRAKHGLFTFKDGTVRYDMSDIPLTHIRPAEIGVSCERMIELGYLKDIYGKPLIDSEQVLCLKVQDLVISYDAADYILRITQYIDDLLVKYYKVAPYYNAKHIDDIVGVLLMGLAPHTSAGVLGRLIGFTTASVGYAHPYFHAAKRRNCDGDEDCVMLLMDGLLNFSRDYLPDKRGGQMDAPLVLTTRLDPSEVDKEAHNIDMCASYPLEFYEATQNIANPKDFEGTMDLVSGRLGTTLQYEEFMFTHDTSNIAAGPLKSAYKTLGTMVEKMDAQLELAKKIRAVDAPDVAERVLTSHFLPDMFGNLRAFSRQRTRCVKCAAKFRRPPLTGSCPKCGGRVILTVHEGAVKKYLQVSIKIAEEYNVSSYTKQRIELIGYDMKSLFENDKSKQMGLSDFM.

The disordered stretch occupies residues 284-303 (KSSSESDEDEETDGKPKIKP).

This sequence belongs to the archaeal DNA polymerase II family. As to quaternary structure, heterodimer of a large subunit and a small subunit.

The enzyme catalyses DNA(n) + a 2'-deoxyribonucleoside 5'-triphosphate = DNA(n+1) + diphosphate. The catalysed reaction is Exonucleolytic cleavage in the 3'- to 5'-direction to yield nucleoside 5'-phosphates.. Functionally, possesses two activities: a DNA synthesis (polymerase) and an exonucleolytic activity that degrades single-stranded DNA in the 3'- to 5'-direction. Has a template-primer preference which is characteristic of a replicative DNA polymerase. This Methanococcoides burtonii (strain DSM 6242 / NBRC 107633 / OCM 468 / ACE-M) protein is DNA polymerase II large subunit.